Reading from the N-terminus, the 389-residue chain is MQASRSATRHLLRHATRPPSGFVCRSCLSRRSSSTSASPRSPPPPPPTAGFTALKSRRLISVSGPDAAKYLQGVVTANIINNNKTGFYTAFLNAQGRVLHDVFIYPDASKDGEGFLIEVDATEAERLTRHIKRYKLRAKLNLRLLDDGEATVWQAWDDSKADFAPAVGMTTPVRDPRSPMLGYRVLTPGDHAQTPQLDLDPTPETSYRIRRYLQGVAEGQTEILREHALPAESNMDVTGAIDFRKGCYVGQELTIRTRHRGVVRKRILPCVLYDHFAAPERLEYKHDGVVTAEGVPPETSIGRATKRGRSTGKWLSGVGNIGLALCRLEIMTDLTLPGEPAAALESGNDEFVLTPKSDEDVGSEGAPFKVKAFVPDWLRQGLAAQTAGH.

A disordered region spans residues 1–20 (MQASRSATRHLLRHATRPPS). Residues 1-40 (MQASRSATRHLLRHATRPPSGFVCRSCLSRRSSSTSASPR) constitute a mitochondrion transit peptide. Basic residues predominate over residues 7–16 (ATRHLLRHAT).

It belongs to the GcvT family. CAF17/IBA57 subfamily.

Its subcellular location is the mitochondrion matrix. The protein is Iron-sulfur cluster assembly factor IBA57 homolog, mitochondrial (CAF17) of Pyricularia oryzae (strain 70-15 / ATCC MYA-4617 / FGSC 8958) (Rice blast fungus).